The chain runs to 138 residues: Phosphoribosyl-AMP cyclohydrolase (138 aa).

Asp-84 contacts Mg(2+). Cys-85 is a binding site for Zn(2+). Asp-86 and Asp-88 together coordinate Mg(2+). Positions 102 and 109 each coordinate Zn(2+).

The protein belongs to the PRA-CH family. Homodimer. Requires Mg(2+) as cofactor. The cofactor is Zn(2+).

The protein resides in the cytoplasm. The enzyme catalyses 1-(5-phospho-beta-D-ribosyl)-5'-AMP + H2O = 1-(5-phospho-beta-D-ribosyl)-5-[(5-phospho-beta-D-ribosylamino)methylideneamino]imidazole-4-carboxamide. Its pathway is amino-acid biosynthesis; L-histidine biosynthesis; L-histidine from 5-phospho-alpha-D-ribose 1-diphosphate: step 3/9. Functionally, catalyzes the hydrolysis of the adenine ring of phosphoribosyl-AMP. In Burkholderia multivorans (strain ATCC 17616 / 249), this protein is Phosphoribosyl-AMP cyclohydrolase.